Consider the following 238-residue polypeptide: Ribonuclease PH (238 aa).

Phosphate-binding positions include arginine 86 and 124-126; that span reads GTR.

This sequence belongs to the RNase PH family. Homohexameric ring arranged as a trimer of dimers.

It carries out the reaction tRNA(n+1) + phosphate = tRNA(n) + a ribonucleoside 5'-diphosphate. Functionally, phosphorolytic 3'-5' exoribonuclease that plays an important role in tRNA 3'-end maturation. Removes nucleotide residues following the 3'-CCA terminus of tRNAs; can also add nucleotides to the ends of RNA molecules by using nucleoside diphosphates as substrates, but this may not be physiologically important. Probably plays a role in initiation of 16S rRNA degradation (leading to ribosome degradation) during starvation. This Salmonella choleraesuis (strain SC-B67) protein is Ribonuclease PH.